We begin with the raw amino-acid sequence, 151 residues long: Transcriptional repressor NrdR (151 aa).

A zinc finger lies at 3-34 (CPFCNAQDTKVIDSRLVSEGSQVRRRRSCNEC). An ATP-cone domain is found at 49-139 (PRLIKSDGRR…VYRSFKDVKE (91 aa)).

It belongs to the NrdR family. It depends on Zn(2+) as a cofactor.

In terms of biological role, negatively regulates transcription of bacterial ribonucleotide reductase nrd genes and operons by binding to NrdR-boxes. The polypeptide is Transcriptional repressor NrdR (Psychromonas ingrahamii (strain DSM 17664 / CCUG 51855 / 37)).